Consider the following 224-residue polypeptide: UPF0758 protein HEAR2468 (224 aa).

The region spanning 102–224 (ALNSPQAVKQ…VYSFAEQGQL (123 aa)) is the MPN domain. 3 residues coordinate Zn(2+): His-173, His-175, and Asp-186. A JAMM motif motif is present at residues 173–186 (HNHPSGTPEPSAAD).

The protein belongs to the UPF0758 family.

The chain is UPF0758 protein HEAR2468 from Herminiimonas arsenicoxydans.